The following is a 127-amino-acid chain: Small ribosomal subunit protein uS11 (127 aa).

The protein belongs to the universal ribosomal protein uS11 family. In terms of assembly, part of the 30S ribosomal subunit. Interacts with proteins S7 and S18. Binds to IF-3.

Located on the platform of the 30S subunit, it bridges several disparate RNA helices of the 16S rRNA. Forms part of the Shine-Dalgarno cleft in the 70S ribosome. The protein is Small ribosomal subunit protein uS11 of Chlorobium luteolum (strain DSM 273 / BCRC 81028 / 2530) (Pelodictyon luteolum).